A 161-amino-acid polypeptide reads, in one-letter code: Ribosomal RNA large subunit methyltransferase H (161 aa).

S-adenosyl-L-methionine is bound by residues Leu78, Gly110, and 129–134; that span reads LSRLTF.

Belongs to the RNA methyltransferase RlmH family. Homodimer.

Its subcellular location is the cytoplasm. It carries out the reaction pseudouridine(1915) in 23S rRNA + S-adenosyl-L-methionine = N(3)-methylpseudouridine(1915) in 23S rRNA + S-adenosyl-L-homocysteine + H(+). Its function is as follows. Specifically methylates the pseudouridine at position 1915 (m3Psi1915) in 23S rRNA. The chain is Ribosomal RNA large subunit methyltransferase H from Heliobacterium modesticaldum (strain ATCC 51547 / Ice1).